The following is a 100-amino-acid chain: Small ribosomal subunit protein uS14c (100 aa).

The protein belongs to the universal ribosomal protein uS14 family. Part of the 30S ribosomal subunit.

The protein localises to the plastid. Its subcellular location is the chloroplast. Binds 16S rRNA, required for the assembly of 30S particles. This chain is Small ribosomal subunit protein uS14c, found in Helianthus annuus (Common sunflower).